The sequence spans 177 residues: Large ribosomal subunit protein uL6 (177 aa).

The protein belongs to the universal ribosomal protein uL6 family. Part of the 50S ribosomal subunit.

This protein binds to the 23S rRNA, and is important in its secondary structure. It is located near the subunit interface in the base of the L7/L12 stalk, and near the tRNA binding site of the peptidyltransferase center. This chain is Large ribosomal subunit protein uL6, found in Cereibacter sphaeroides (strain ATCC 17025 / ATH 2.4.3) (Rhodobacter sphaeroides).